Here is a 121-residue protein sequence, read N- to C-terminus: Large ribosomal subunit protein bL20 (121 aa).

This sequence belongs to the bacterial ribosomal protein bL20 family.

Binds directly to 23S ribosomal RNA and is necessary for the in vitro assembly process of the 50S ribosomal subunit. It is not involved in the protein synthesizing functions of that subunit. The chain is Large ribosomal subunit protein bL20 from Polynucleobacter asymbioticus (strain DSM 18221 / CIP 109841 / QLW-P1DMWA-1) (Polynucleobacter necessarius subsp. asymbioticus).